The chain runs to 395 residues: Cysteine synthase 2 (395 aa).

The helical transmembrane segment at 6–22 (QDLASGIAMGAVFMYLL) threads the bilayer. At Lys83 the chain carries N6-(pyridoxal phosphate)lysine. Residues 228 to 232 (GTGGT) and Ser335 each bind pyridoxal 5'-phosphate.

It belongs to the cysteine synthase/cystathionine beta-synthase family. It depends on pyridoxal 5'-phosphate as a cofactor.

Its subcellular location is the mitochondrion. It is found in the mitochondrion outer membrane. It catalyses the reaction O-acetyl-L-serine + hydrogen sulfide = L-cysteine + acetate. Its function is as follows. Putative cysteine synthase that catalyzes the conversion of O-acetyl-L-serine (OAS) into cysteine, the last step in the cysteine biosynthesis pathway. However, in contrast to cysteine synthase cys11, this CS-like protein seems not to function in cysteine biosynthesis, at least under normal growth conditions, although the transcript is produced. The polypeptide is Cysteine synthase 2 (cys12) (Schizosaccharomyces pombe (strain 972 / ATCC 24843) (Fission yeast)).